Here is a 216-residue protein sequence, read N- to C-terminus: MKTLDTQLKLRYLGRQDYLTSWQAMSDFTNQRDENTIDEIWLVEHPAVFTQGLAGKAEHLLKHSEIPIVQSDRGGQITFHAPGQLVVYLLINLRRKALNVRALVTVMEDSIINLLADYNVIAVAKPDAPGVYVNGKKIASLGLKIRKGCSFHGLALNVDMDLSPFLQINPCGYAGLEMTQCKAEGLTLSVDELAPLLIEKMNQQLDYSHIESFHHE.

Residues 34–209 (ENTIDEIWLV…KMNQQLDYSH (176 aa)) enclose the BPL/LPL catalytic domain. Substrate contacts are provided by residues 73 to 80 (RGGQITFH), 140 to 142 (SLG), and 153 to 155 (GLA). Cys171 (acyl-thioester intermediate) is an active-site residue.

It belongs to the LipB family.

Its subcellular location is the cytoplasm. The catalysed reaction is octanoyl-[ACP] + L-lysyl-[protein] = N(6)-octanoyl-L-lysyl-[protein] + holo-[ACP] + H(+). Its pathway is protein modification; protein lipoylation via endogenous pathway; protein N(6)-(lipoyl)lysine from octanoyl-[acyl-carrier-protein]: step 1/2. Catalyzes the transfer of endogenously produced octanoic acid from octanoyl-acyl-carrier-protein onto the lipoyl domains of lipoate-dependent enzymes. Lipoyl-ACP can also act as a substrate although octanoyl-ACP is likely to be the physiological substrate. The protein is Octanoyltransferase of Psychromonas ingrahamii (strain DSM 17664 / CCUG 51855 / 37).